Consider the following 1104-residue polypeptide: Reverse gyrase (1104 aa).

Residues 1-39 (MAVNSKYHHSCINCGGLNTDERNERGLPCEVCLPEDSPS) form an RG N-terminal-type zinc finger. Positions 11, 14, 29, and 32 each coordinate Zn(2+). Residues phenylalanine 75, aspartate 78, glutamine 83, glycine 103, glycine 105, lysine 106, threonine 107, and threonine 108 each coordinate ADP. Residues glutamine 83 and 100–107 (APTGVGKT) each bind ATP. The Helicase ATP-binding domain occupies 87-242 (AKRIVQGKSF…FSTIKQGKIY (156 aa)). The DEAD box signature appears at 203 to 206 (DDVD). The segment at 223-250 (GIPEEIIRKAFSTIKQGKIYERPKNLKP) is insert region. Residues 300 to 522 (KLVELLEIFR…EAEANWKELV (223 aa)) form the Helicase C-terminal domain. Residues 390 to 460 (RFSLELDKAP…KDEDLELIIP (71 aa)) form a latch region region. The tract at residues 538 to 1104 (DTSRSLLIIV…EEIKSLMEEG (567 aa)) is topoisomerase I. In terms of domain architecture, Toprim spans 542–699 (SLLIIVESPT…SLRRIEMHEI (158 aa)). Glutamate 548 contacts Mg(2+). An RG C-terminal-type zinc finger spans residues 618-645 (LKRCRDCGYQFTEDRDECPVCSSKNIDD). The Zn(2+) site is built by cysteine 621, cysteine 624, cysteine 635, and cysteine 638. Aspartate 668 contributes to the Mg(2+) binding site. The 387-residue stretch at 715–1101 (DFNLVKAQIV…LLYEEIKSLM (387 aa)) folds into the Topo IA-type catalytic domain. The active-site O-(5'-phospho-DNA)-tyrosine intermediate is the tyrosine 851.

It in the N-terminal section; belongs to the DEAD box helicase family. DDVD subfamily. This sequence in the C-terminal section; belongs to the type IA topoisomerase family. In terms of assembly, monomer. It depends on Zn(2+) as a cofactor. Mg(2+) serves as cofactor.

It localises to the cytoplasm. The catalysed reaction is ATP + H2O = ADP + phosphate + H(+). Modifies the topological state of DNA by introducing positive supercoils in an ATP-dependent process. Increases the linking number in steps of +1. Probably recognizes regions with a low GC content which melt and form a ssDNA bubble, allowing the enzyme to bind and cleave the DNA prior to strand passage; the bubble is probably cleaved by 2 reverse gyrase molecules, one on each strand. Positively supercoils DNA with all NTPS, although it strongly prefers ATP. In the presence of non-hydrolyzable ATP analogs it partially relaxes negative supercoils. Has an intrinsic ATPase activity that is stimulated by DNA; ssDNA is most effective. Binds to single-stranded DNA, transiently cleaves and then rejoins the ends, introducing a positive supercoil in the process. The scissile phosphodiester is attacked by the catalytic tyrosine of the enzyme, resulting in the formation of a DNA-(5'-phosphotyrosyl)-enzyme intermediate. The helicase-like domain is a nucleotide-dependent switch that alternates between a physically closed ATP-bound state with a slight preference for dsDNA, and an open ADP-bound state with a high preference for ssDNA. Whole enzyme has a very poor (k-unwind=0.001 sec(-1)) non-processive helicase activity in the 3'-5' direction that works on short substrates, while the isolated helicase domain has a slightly better helicase activity that works in both directions. Probably involved in rewinding DNA strands in regions of the chromosome that have opened up to allow replication, transcription, DNA repair and/or for DNA protection. The sequence is that of Reverse gyrase from Thermotoga maritima (strain ATCC 43589 / DSM 3109 / JCM 10099 / NBRC 100826 / MSB8).